The sequence spans 450 residues: NADP-specific glutamate dehydrogenase (450 aa).

The active site involves lysine 111.

It belongs to the Glu/Leu/Phe/Val dehydrogenases family. In terms of assembly, homohexamer.

It catalyses the reaction L-glutamate + NADP(+) + H2O = 2-oxoglutarate + NH4(+) + NADPH + H(+). The sequence is that of NADP-specific glutamate dehydrogenase (GDHA) from Laccaria bicolor (strain S238N-H82 / ATCC MYA-4686) (Bicoloured deceiver).